The following is a 332-amino-acid chain: L-lactate dehydrogenase A chain (332 aa).

Alanine 2 carries the N-acetylalanine modification. The residue at position 5 (lysine 5) is an N6-acetyllysine; alternate. Lysine 5 bears the N6-succinyllysine; alternate mark. Lysine 14 carries the post-translational modification N6-acetyllysine. Threonine 18 bears the Phosphothreonine mark. An NAD(+)-binding site is contributed by glycine 29–lysine 57. Lysine 57 bears the N6-acetyllysine; alternate mark. A Glycyl lysine isopeptide (Lys-Gly) (interchain with G-Cter in SUMO2); alternate cross-link involves residue lysine 57. The residue at position 81 (lysine 81) is an N6-acetyllysine. Arginine 99 serves as a coordination point for NAD(+). Residue arginine 106 coordinates substrate. Lysine 118 carries the N6-acetyllysine; alternate modification. The residue at position 118 (lysine 118) is an N6-succinyllysine; alternate. Lysine 126 carries the post-translational modification N6-acetyllysine. Residues asparagine 138 and arginine 169 each contribute to the substrate site. The active-site Proton acceptor is the histidine 193. 2 positions are modified to N6-acetyllysine: lysine 224 and lysine 232. The residue at position 239 (tyrosine 239) is a Phosphotyrosine. N6-acetyllysine is present on lysine 243. Substrate is bound at residue threonine 248. Threonine 309 carries the post-translational modification Phosphothreonine. Serine 310 is subject to Phosphoserine. Lysine 318 is subject to N6-acetyllysine; alternate. Lysine 318 carries the N6-succinyllysine; alternate modification. Position 322 is a phosphothreonine (threonine 322).

This sequence belongs to the LDH/MDH superfamily. LDH family. In terms of assembly, homotetramer. Interacts with PTEN upstream reading frame protein MP31. ISGylated.

The protein localises to the cytoplasm. It catalyses the reaction (S)-lactate + NAD(+) = pyruvate + NADH + H(+). The protein operates within fermentation; pyruvate fermentation to lactate; (S)-lactate from pyruvate: step 1/1. Its function is as follows. Interconverts simultaneously and stereospecifically pyruvate and lactate with concomitant interconversion of NADH and NAD(+). This Pan troglodytes (Chimpanzee) protein is L-lactate dehydrogenase A chain (LDHA).